A 275-amino-acid chain; its full sequence is Hydroxyethylthiazole kinase (275 aa).

Methionine 50 lines the substrate pocket. Positions 126 and 171 each coordinate ATP. Position 200 (alanine 200) interacts with substrate.

It belongs to the Thz kinase family. The cofactor is Mg(2+).

It catalyses the reaction 5-(2-hydroxyethyl)-4-methylthiazole + ATP = 4-methyl-5-(2-phosphooxyethyl)-thiazole + ADP + H(+). The protein operates within cofactor biosynthesis; thiamine diphosphate biosynthesis; 4-methyl-5-(2-phosphoethyl)-thiazole from 5-(2-hydroxyethyl)-4-methylthiazole: step 1/1. Functionally, catalyzes the phosphorylation of the hydroxyl group of 4-methyl-5-beta-hydroxyethylthiazole (THZ). In Acinetobacter baumannii (strain SDF), this protein is Hydroxyethylthiazole kinase.